Here is a 367-residue protein sequence, read N- to C-terminus: MSSPRQTPLHEIHEALGATFTEFAGWRMPLRYTGDAAEHNAVRTAAGLFDLTHMGEIRISGPQAPEALDYALVANASAITVGRARYTMICNSEGGVLDDLIVYRLGEQEYLVVANAANAAVVSAELAERVARFEASHEDVSDDYALIAVQGPKAVDILAPLTSTDLSTVKYYAGYRSEVAGARVMLARTGYTGEDGFELFTSPADAPAVWQALADSGAEHGLRPAGLSCRDTLRLEAGMPLYGNELSAELTPFHANLGRVVKLDKPGDFVGKAPLAAAAEKPTERKLVGLRTDQRRAPRHGYRVLDAGGAEIGVVTSGAPSPTLGHPIAMAYVDRDHAEPGTALQVDIRGTAVPVEVVALPFYRRNA.

This sequence belongs to the GcvT family. The glycine cleavage system is composed of four proteins: P, T, L and H.

The enzyme catalyses N(6)-[(R)-S(8)-aminomethyldihydrolipoyl]-L-lysyl-[protein] + (6S)-5,6,7,8-tetrahydrofolate = N(6)-[(R)-dihydrolipoyl]-L-lysyl-[protein] + (6R)-5,10-methylene-5,6,7,8-tetrahydrofolate + NH4(+). In terms of biological role, the glycine cleavage system catalyzes the degradation of glycine. The protein is Aminomethyltransferase of Saccharopolyspora erythraea (strain ATCC 11635 / DSM 40517 / JCM 4748 / NBRC 13426 / NCIMB 8594 / NRRL 2338).